The following is a 280-amino-acid chain: Gem-associated protein 2 (280 aa).

The may play a minor inhibitory role in snRNA binding to 5Sm (SNRPD1, SNRPD2, SNRPE, SNRPF and SNRPG) during snRNP assembly by inserting into the RNA binding pocket of 5Sm stretch occupies residues 1-39 (MRRAELAGLKTMAWVPAESAVEELMPRLLPVEPCDLTEG). Ser81 and Ser166 each carry phosphoserine.

The protein belongs to the gemin-2 family. In terms of assembly, monomer. Part of the core SMN complex that contains SMN1, GEMIN2/SIP1, DDX20/GEMIN3, GEMIN4, GEMIN5, GEMIN6, GEMIN7, GEMIN8 and STRAP/UNRIP. Part of the SMN-Sm complex that contains SMN1, GEMIN2/SIP1, DDX20/GEMIN3, GEMIN4, GEMIN5, GEMIN6, GEMIN7, GEMIN8, STRAP/UNRIP and the Sm proteins SNRPB, SNRPD1, SNRPD2, SNRPD3, SNRPE, SNRPF and SNRPG. Interacts with GEMIN5; the interaction is direct. Interacts (via C-terminus) with SMN1; the interaction is direct. Interacts with SNRPD1; the interaction is direct. Interacts with SNRPD2; the interaction is direct. Interacts (via N-terminus) with SNRPF; the interaction is direct. Interacts (via N-terminus) with SNRPE; the interaction is direct. Interacts (via N-terminus) with SNRPG; the interaction is direct.

It localises to the nucleus. The protein resides in the gem. Its subcellular location is the cytoplasm. In terms of biological role, the SMN complex catalyzes the assembly of small nuclear ribonucleoproteins (snRNPs), the building blocks of the spliceosome, and thereby plays an important role in the splicing of cellular pre-mRNAs. Most spliceosomal snRNPs contain a common set of Sm proteins SNRPB, SNRPD1, SNRPD2, SNRPD3, SNRPE, SNRPF and SNRPG that assemble in a heptameric protein ring on the Sm site of the small nuclear RNA to form the core snRNP (Sm core). In the cytosol, the Sm proteins SNRPD1, SNRPD2, SNRPE, SNRPF and SNRPG (5Sm) are trapped in an inactive 6S pICln-Sm complex by the chaperone CLNS1A that controls the assembly of the core snRNP. To assemble core snRNPs, the SMN complex accepts the trapped 5Sm proteins from CLNS1A. Binding of snRNA inside 5Sm ultimately triggers eviction of the SMN complex, thereby allowing binding of SNRPD3 and SNRPB to complete assembly of the core snRNP. Within the SMN complex, GEMIN2 constrains the conformation of 5Sm, thereby promoting 5Sm binding to snRNA containing the snRNP code (a nonameric Sm site and a 3'-adjacent stem-loop), thus preventing progression of assembly until a cognate substrate is bound. The polypeptide is Gem-associated protein 2 (Homo sapiens (Human)).